The chain runs to 453 residues: MNPVLTSRQADELHKSIVAYLTANNLSTTAATLREELSLGEDVFDAEKTAKYQSLLEKKWTSVVRLQKKVMDLESRSVALQSELEHSTPASLSKRKDPTSWLPRSPPRHSLESHQAIVNCLAFHPVFSSLASGSDDSTVKIWDWELGELERTLKGHTRAVLDIDFGGPRGAILLASCSSDSTIKLWDPADEYKNTRTLTGHDHSVSAVRFVTSRPRSENLLVSASGDKTLKVWDITAGYCIKTLQGHTGWVRDVVPSLDGRFLLSSGTDQTARLWDISAADPESKLVMVGHENGIRCCAFAPPASYVHMAALAGLKKPPPSTSTAEFMATGSRDKTIKLWNSTGTCIKTLVGHDNWVSGLVFHPGGKYLLSVADDKTLRCWDLGDDGRCVKVLADAHGQFITCLRWAPGIVKKGADQGAEDTGPLEKTAPSEVQIRCLVATTSVDKVVRIFAD.

Residues 9–41 (QADELHKSIVAYLTANNLSTTAATLREELSLGE) form the LisH domain. Positions 63–87 (VVRLQKKVMDLESRSVALQSELEHS) form a coiled coil. A disordered region spans residues 84–108 (LEHSTPASLSKRKDPTSWLPRSPPR). WD repeat units follow at residues 113 to 154 (SHQA…RTLK), 156 to 196 (HTRA…KNTR), 200 to 243 (GHDH…CIKT), 246 to 285 (GHTG…PESK), 290 to 350 (GHEN…IKTL), 352 to 391 (GHDN…RCVK), and 396 to 448 (AHGQ…DKVV).

It belongs to the WD repeat LIS1/nudF family. Self-associates. Interacts with NDL1 and dynein.

It localises to the cytoplasm. It is found in the cytoskeleton. The protein localises to the spindle pole. Functionally, positively regulates the activity of the minus-end directed microtubule motor protein dynein. May enhance dynein-mediated microtubule sliding by targeting dynein to the microtubule plus end. Required for nuclear migration during vegetative growth as well as development. Required for retrograde early endosome (EE) transport from the hyphal tip. Required for localization of dynein to the mitotic spindle poles. Recruits additional proteins to the dynein complex at SPBs. The protein is Nuclear distribution protein PAC1-2 of Chaetomium globosum (strain ATCC 6205 / CBS 148.51 / DSM 1962 / NBRC 6347 / NRRL 1970) (Soil fungus).